Reading from the N-terminus, the 417-residue chain is MAEIKNYTLNFGPQHPAAHGVLRLVLELDGEVIQRADPHIGLLHRATEKLAETKTYIQALPYMDRLDYMSMMCNESAYCLAVEKMLGLEVPIRAKYIRVMFAEITRLLNHLLCVGAGALDCGAMTVMLYAFREREDLLDMYEAVSGARMHAAYFRPGGVYRDLPDTMARHQPNKIRSAKSTEKLNRNRDGSLLDFIDDFTQRFPTYLGEYHTLLTDNRIWKQRTVGIGVVTAERALNLGFSGPMLRGSGVAWDLRKKQPYEIYDRLDFDIPVGKTGDCYDRYLVRMEEMKQSNRIIKQCVDWLRVNPGPVITDNHKIAPPNRESMKSNMEELIHHFKLFSEGFSVPEGEAYATIEHPKGEFGIYMVSDGANKPYRMKIRPPAFVHLAALGEMGRGHMIGDAVAIIGSLDIVFGEVDR.

Belongs to the complex I 49 kDa subunit family. NDH-1 is composed of 14 different subunits. Subunits NuoB, C, D, E, F, and G constitute the peripheral sector of the complex.

It is found in the cell inner membrane. It carries out the reaction a quinone + NADH + 5 H(+)(in) = a quinol + NAD(+) + 4 H(+)(out). Functionally, NDH-1 shuttles electrons from NADH, via FMN and iron-sulfur (Fe-S) centers, to quinones in the respiratory chain. The immediate electron acceptor for the enzyme in this species is believed to be ubiquinone. Couples the redox reaction to proton translocation (for every two electrons transferred, four hydrogen ions are translocated across the cytoplasmic membrane), and thus conserves the redox energy in a proton gradient. The chain is NADH-quinone oxidoreductase subunit D from Albidiferax ferrireducens (strain ATCC BAA-621 / DSM 15236 / T118) (Rhodoferax ferrireducens).